Here is a 365-residue protein sequence, read N- to C-terminus: Cobalt-precorrin-5B C(1)-methyltransferase (365 aa).

Belongs to the CbiD family.

The enzyme catalyses Co-precorrin-5B + S-adenosyl-L-methionine = Co-precorrin-6A + S-adenosyl-L-homocysteine. Its pathway is cofactor biosynthesis; adenosylcobalamin biosynthesis; cob(II)yrinate a,c-diamide from sirohydrochlorin (anaerobic route): step 6/10. Its function is as follows. Catalyzes the methylation of C-1 in cobalt-precorrin-5B to form cobalt-precorrin-6A. The sequence is that of Cobalt-precorrin-5B C(1)-methyltransferase from Geobacillus sp. (strain WCH70).